Reading from the N-terminus, the 237-residue chain is Ubiquinone biosynthesis O-methyltransferase (237 aa).

Residues Arg38, Gly58, Asp79, and Met124 each contribute to the S-adenosyl-L-methionine site.

Belongs to the methyltransferase superfamily. UbiG/COQ3 family.

It catalyses the reaction a 3-demethylubiquinol + S-adenosyl-L-methionine = a ubiquinol + S-adenosyl-L-homocysteine + H(+). The catalysed reaction is a 3-(all-trans-polyprenyl)benzene-1,2-diol + S-adenosyl-L-methionine = a 2-methoxy-6-(all-trans-polyprenyl)phenol + S-adenosyl-L-homocysteine + H(+). The protein operates within cofactor biosynthesis; ubiquinone biosynthesis. Functionally, O-methyltransferase that catalyzes the 2 O-methylation steps in the ubiquinone biosynthetic pathway. This is Ubiquinone biosynthesis O-methyltransferase from Acinetobacter baumannii (strain ACICU).